The following is a 94-amino-acid chain: DASH complex subunit DAD5 (94 aa).

The span at 1 to 20 (MRRSTIVPTSRTSSSSPSPS) shows a compositional bias: low complexity. A disordered region spans residues 1 to 25 (MRRSTIVPTSRTSSSSPSPSQMKSF).

The protein belongs to the DASH complex HSK3 family. Component of the DASH complex consisting of ask1, dad1, dad2, dad3, dad4, dam1, duo1, dad5, spc19 and spc34, with a stoichiometry of one copy of each subunit per complex. Multiple DASH complexes oligomerize to form a ring that encircles spindle microtubules and organizes the rod-like NDC80 complexes of the outer kinetochore. DASH complex oligomerization strengthens microtubule attachments. On cytoplasmic microtubules, DASH complexes appear to form patches instead of rings.

The protein localises to the nucleus. The protein resides in the cytoplasm. Its subcellular location is the cytoskeleton. It localises to the spindle. It is found in the chromosome. The protein localises to the centromere. The protein resides in the kinetochore. In terms of biological role, component of the DASH complex that connects microtubules with kinetochores and couples microtubule depolymerisation to chromosome movement; it is involved in retrieving kinetochores to the spindle poles before their re-orientation on the spindle in early mitosis and allows microtubule depolymerization to pull chromosomes apart and resist detachment during anaphase. Kinetochores, consisting of a centromere-associated inner segment and a microtubule-contacting outer segment, play a crucial role in chromosome segregation by mediating the physical connection between centromeric DNA and microtubules. Kinetochores also serve as an input point for the spindle assembly checkpoint, which delays anaphase until all chromosomes have bioriented on the mitotic spindle. The DASH complex mediates bipolar kinetochore-microtubule attachments and facilitates the formation of additional interactions between outer kinetochore components and spindle microtubules. During chromosome movement along the microtubule, it is required both for the sliding of kinetochores along the lateral side of the microtubule and also for microtubule end-on pulling on the kinetochore. Modulates cytoplasmic microtubule dynamics by tracking the plus-end of shortening microtubules and slowing their depolymerization. The protein is DASH complex subunit DAD5 of Schizosaccharomyces pombe (strain 972 / ATCC 24843) (Fission yeast).